The primary structure comprises 374 residues: MKRQNVRTLSLIICTFTYLLVGAAVFDALESDYEMREEEKLKAEEIRLKGKYNISSEDYRQLELVIMQSEPHRAGVQWKFAGSFYFAITVITTIGYGHAAPGTDAGKAFCMFYAVLGIPLTLVMFQSLGERMNTFVKYLLKRIKKCCGMHSTDVSMENMVTVGFFSCMGTLCIGAAAFSHYEEWSFFQAYYYCFITLTTIGFGDYVALQKNRALQKKPLYVAFSFMYILVGLTVIGAFLNLVVLRFLTMNSEDERRDAEERASLAGNRNSMIIHIQEDTPHGRQRYKAEVTDLQSVCSCMCYRSHEYTSRMVSHQNSFSSKLNPQYFHSISYKIEEISPSTLKNSLFPSPVSSVSPGLHSFTDKHRLMKRRKSI.

The Cytoplasmic portion of the chain corresponds to 1-8; that stretch reads MKRQNVRT. A helical membrane pass occupies residues 9–29; that stretch reads LSLIICTFTYLLVGAAVFDAL. Residues 30–88 are Extracellular-facing; it reads ESDYEMREEEKLKAEEIRLKGKYNISSEDYRQLELVIMQSEPHRAGVQWKFAGSFYFAI. Asparagine 53 carries N-linked (GlcNAc...) asparagine glycosylation. The segment at residues 89 to 101 is an intramembrane region (pore-forming); sequence TVITTIGYGHAAP. The Extracellular portion of the chain corresponds to 102–107; the sequence is GTDAGK. Residues 108-128 traverse the membrane as a helical segment; that stretch reads AFCMFYAVLGIPLTLVMFQSL. The Cytoplasmic segment spans residues 129-158; it reads GERMNTFVKYLLKRIKKCCGMHSTDVSMEN. A helical transmembrane segment spans residues 159–179; the sequence is MVTVGFFSCMGTLCIGAAAFS. At 180–194 the chain is on the extracellular side; that stretch reads HYEEWSFFQAYYYCF. The segment at residues 195-207 is an intramembrane region (pore-forming); the sequence is ITLTTIGFGDYVA. Topologically, residues 208–218 are extracellular; it reads LQKNRALQKKP. A helical membrane pass occupies residues 219–239; it reads LYVAFSFMYILVGLTVIGAFL. Residues 240–374 lie on the Cytoplasmic side of the membrane; sequence NLVVLRFLTM…HRLMKRRKSI (135 aa).

Belongs to the two pore domain potassium channel (TC 1.A.1.8) family. In terms of assembly, homodimer. May form heterodimers with other family members.

The protein localises to the cell membrane. In terms of biological role, pH-dependent, voltage-insensitive, background potassium channel protein. The chain is Potassium channel subfamily K member 9 (kcnk9) from Xenopus laevis (African clawed frog).